A 129-amino-acid chain; its full sequence is C-type natriuretic peptide 1 (129 aa).

Residues 1 to 24 form the signal peptide; that stretch reads MSYKRGTCLGFIMLLMVSHHHTKG. A propeptide spanning residues 25 to 107 is cleaved from the precursor; sequence KPLSSLQNLS…SRRYRQRNKK (83 aa). Residues Cys-113 and Cys-129 are joined by a disulfide bond.

The protein belongs to the natriuretic peptide family.

It localises to the secreted. Functionally, hormone which plays a role in endochondral ossification through regulation of cartilaginous growth plate chondrocytes proliferation and differentiation. May also be vasoactive and natriuretic. May be important for freshwater adaptation. In Aquarana catesbeiana (American bullfrog), this protein is C-type natriuretic peptide 1.